A 357-amino-acid chain; its full sequence is N-acetyl-gamma-glutamyl-phosphate reductase (357 aa).

Residue Cys-160 is part of the active site.

The protein belongs to the NAGSA dehydrogenase family. Type 1 subfamily.

Its subcellular location is the cytoplasm. It catalyses the reaction N-acetyl-L-glutamate 5-semialdehyde + phosphate + NADP(+) = N-acetyl-L-glutamyl 5-phosphate + NADPH + H(+). It participates in amino-acid biosynthesis; L-arginine biosynthesis; N(2)-acetyl-L-ornithine from L-glutamate: step 3/4. Catalyzes the NADPH-dependent reduction of N-acetyl-5-glutamyl phosphate to yield N-acetyl-L-glutamate 5-semialdehyde. The polypeptide is N-acetyl-gamma-glutamyl-phosphate reductase (Parasynechococcus marenigrum (strain WH8102)).